The chain runs to 238 residues: Small ribosomal subunit protein uS3 (238 aa).

One can recognise a KH type-2 domain in the interval 39–108; the sequence is IRKFVKKKLF…NVAVNVIEVK (70 aa).

Belongs to the universal ribosomal protein uS3 family. In terms of assembly, part of the 30S ribosomal subunit. Forms a tight complex with proteins S10 and S14.

Binds the lower part of the 30S subunit head. Binds mRNA in the 70S ribosome, positioning it for translation. The sequence is that of Small ribosomal subunit protein uS3 from Alkaliphilus oremlandii (strain OhILAs) (Clostridium oremlandii (strain OhILAs)).